The following is a 389-amino-acid chain: MNFHEYQSKQLLAEYGIPVPSGKVAATPDEAVDVATSLGKGPWMVKAQIHAGGRGKAGGVKFCKTTDDVKAAAAKMLGTKMSTYQTAGVELPINLVLVTTAGEIVKELYLSILVDRGTKTITYIASSEGGVEIEQVAAETPELIHALNVDFVEGVQGYHGRDFGFKLGLNAKQAGQFASIMVNLYKLFNEKDLALVEINPLAILDDGNLYALDGKFDSDDNAAFRQKQLVAMRDKTQEDETEVTASELDINYVTMDGNIGCMVNGAGLAMATMDVIKLNGGEPANFLDVGGGANKQRVIEAFKLILSSDKVEGIFVNIFGGIVRCDMIAEGIIAAVKEVGVKVPVVVRLEGTNVEEGKQLLRDSGMAIIPADNINDGAKKVVEAVKNAA.

An ATP-grasp domain is found at 9–244 (KQLLAEYGIP…KTQEDETEVT (236 aa)). ATP contacts are provided by residues K46, 53 to 55 (GRG), G102, and E107. Mg(2+) is bound by residues N199 and D213. Substrate contacts are provided by residues N264 and 321–323 (GIV).

Belongs to the succinate/malate CoA ligase beta subunit family. In terms of assembly, heterotetramer of two alpha and two beta subunits. It depends on Mg(2+) as a cofactor.

The catalysed reaction is succinate + ATP + CoA = succinyl-CoA + ADP + phosphate. It catalyses the reaction GTP + succinate + CoA = succinyl-CoA + GDP + phosphate. The protein operates within carbohydrate metabolism; tricarboxylic acid cycle; succinate from succinyl-CoA (ligase route): step 1/1. In terms of biological role, succinyl-CoA synthetase functions in the citric acid cycle (TCA), coupling the hydrolysis of succinyl-CoA to the synthesis of either ATP or GTP and thus represents the only step of substrate-level phosphorylation in the TCA. The beta subunit provides nucleotide specificity of the enzyme and binds the substrate succinate, while the binding sites for coenzyme A and phosphate are found in the alpha subunit. This chain is Succinate--CoA ligase [ADP-forming] subunit beta, found in Xanthomonas oryzae pv. oryzae (strain MAFF 311018).